We begin with the raw amino-acid sequence, 566 residues long: Arginine--tRNA ligase (566 aa).

The 'HIGH' region signature appears at 129 to 139 (ANPTGPLHIGH).

It belongs to the class-I aminoacyl-tRNA synthetase family. As to quaternary structure, monomer.

It is found in the cytoplasm. The catalysed reaction is tRNA(Arg) + L-arginine + ATP = L-arginyl-tRNA(Arg) + AMP + diphosphate. The chain is Arginine--tRNA ligase from Wolbachia pipientis subsp. Culex pipiens (strain wPip).